The following is a 123-amino-acid chain: Small ribosomal subunit protein bS6 (123 aa).

Residues 102 to 123 (MLKQKEERAPRREAEAKEFAAE) are disordered. Positions 104–123 (KQKEERAPRREAEAKEFAAE) are enriched in basic and acidic residues.

This sequence belongs to the bacterial ribosomal protein bS6 family.

Binds together with bS18 to 16S ribosomal RNA. This Vibrio vulnificus (strain CMCP6) protein is Small ribosomal subunit protein bS6.